The sequence spans 134 residues: Small ribosomal subunit protein uS11 (134 aa).

This sequence belongs to the universal ribosomal protein uS11 family. Part of the 30S ribosomal subunit. Interacts with proteins S7 and S18. Binds to IF-3.

Located on the platform of the 30S subunit, it bridges several disparate RNA helices of the 16S rRNA. Forms part of the Shine-Dalgarno cleft in the 70S ribosome. The polypeptide is Small ribosomal subunit protein uS11 (Albidiferax ferrireducens (strain ATCC BAA-621 / DSM 15236 / T118) (Rhodoferax ferrireducens)).